The chain runs to 342 residues: Thioredoxin reductase 2, mitochondrial (342 aa).

Residues 1-23 (MIKHIVSPFRTNFVGISKSVLSR) constitute a mitochondrion transit peptide. Residues 34-37 (SGPA), 56-68 (EGMM…AGGQ), 63-64 (IA), Gln-68, Asn-77, Val-110, Cys-168, Asp-311, 311-320 (DVQDSRYRQA), and 318-320 (RQA) each bind FAD. Cys-165 and Cys-168 are oxidised to a cystine.

It belongs to the class-II pyridine nucleotide-disulfide oxidoreductase family. Homodimer. FAD serves as cofactor.

It is found in the mitochondrion. It catalyses the reaction [thioredoxin]-dithiol + NADP(+) = [thioredoxin]-disulfide + NADPH + H(+). Its function is as follows. Acts on mitochondrial thioredoxin 3. Implicated in the defense against oxidative stress. This chain is Thioredoxin reductase 2, mitochondrial, found in Saccharomyces cerevisiae (strain ATCC 204508 / S288c) (Baker's yeast).